Reading from the N-terminus, the 121-residue chain is Large ribosomal subunit protein P2 (121 aa).

Over residues 72 to 99 the composition is skewed to low complexity; the sequence is VAVPSGGAPAAATAAAEAPKGGDKAAAP. The interval 72–121 is disordered; sequence VAVPSGGAPAAATAAAEAPKGGDKAAAPPKEEKKEESEESDADMGFSPFD.

Belongs to the eukaryotic ribosomal protein P1/P2 family. In terms of assembly, P1 and P2 exist as dimers at the large ribosomal subunit. In terms of processing, phosphorylated.

Plays an important role in the elongation step of protein synthesis. In Taenia solium (Pork tapeworm), this protein is Large ribosomal subunit protein P2.